Here is a 390-residue protein sequence, read N- to C-terminus: Putative nickel insertion protein (390 aa).

The protein belongs to the LarC family.

The protein is Putative nickel insertion protein of Geobacter metallireducens (strain ATCC 53774 / DSM 7210 / GS-15).